The sequence spans 237 residues: uncharacterized protein (237 aa).

A divalent metal cation is bound by residues E91, E93, and D122.

The protein belongs to the FAH family.

This is an uncharacterized protein from Methanocaldococcus jannaschii (strain ATCC 43067 / DSM 2661 / JAL-1 / JCM 10045 / NBRC 100440) (Methanococcus jannaschii).